A 200-amino-acid chain; its full sequence is Probable nicotinate-nucleotide adenylyltransferase (200 aa).

This sequence belongs to the NadD family.

The enzyme catalyses nicotinate beta-D-ribonucleotide + ATP + H(+) = deamido-NAD(+) + diphosphate. Its pathway is cofactor biosynthesis; NAD(+) biosynthesis; deamido-NAD(+) from nicotinate D-ribonucleotide: step 1/1. Its function is as follows. Catalyzes the reversible adenylation of nicotinate mononucleotide (NaMN) to nicotinic acid adenine dinucleotide (NaAD). This is Probable nicotinate-nucleotide adenylyltransferase from Clostridium acetobutylicum (strain ATCC 824 / DSM 792 / JCM 1419 / IAM 19013 / LMG 5710 / NBRC 13948 / NRRL B-527 / VKM B-1787 / 2291 / W).